The chain runs to 286 residues: 33 kDa chaperonin (286 aa).

2 cysteine pairs are disulfide-bonded: cysteine 225–cysteine 227 and cysteine 258–cysteine 261.

This sequence belongs to the HSP33 family. In terms of processing, under oxidizing conditions two disulfide bonds are formed involving the reactive cysteines. Under reducing conditions zinc is bound to the reactive cysteines and the protein is inactive.

It localises to the cytoplasm. In terms of biological role, redox regulated molecular chaperone. Protects both thermally unfolding and oxidatively damaged proteins from irreversible aggregation. Plays an important role in the bacterial defense system toward oxidative stress. This chain is 33 kDa chaperonin, found in Shewanella loihica (strain ATCC BAA-1088 / PV-4).